Here is an 890-residue protein sequence, read N- to C-terminus: Wolframin (890 aa).

N-acetylmethionine is present on M1. The tract at residues 1 to 86 is disordered; it reads MDSNTAPLGP…TGPTKGDMEI (86 aa). The tract at residues 1 to 321 is interaction with ATP6V1A; the sequence is MDSNTAPLGP…MHWLSTIIPT (321 aa). A compositionally biased stretch (pro residues) spans 10 to 20; that stretch reads PSCPQPPPAPQ. At T30 the chain carries Phosphothreonine; by FAM20C. S32 carries the phosphoserine; by FAM20C modification. S157 is modified (phosphoserine). 10 helical membrane passes run 314-334, 340-360, 402-422, 427-447, 465-485, 496-516, 529-549, 563-583, 589-609, and 632-652; these read WLST…FIVS, FFAF…MVIC, LEPY…FPIA, IPCS…YLSL, AGLL…KVLG, LVVL…YLFF, CYLV…VILL, YFLF…VGVL, FTSL…VPLL, and MVKL…FYVY. The Lumenal portion of the chain corresponds to 653-869; sequence RSEGMKVYNS…HVKIEHDWRS (217 aa). N661 and N746 each carry an N-linked (GlcNAc...) asparagine glycan. A helical transmembrane segment spans residues 870-890; it reads TVHGAVKFAFDFFFFPFLSAA.

In terms of assembly, interacts with ATP6V1A. Highly expressed in heart followed by brain, placenta, lung and pancreas. Weakly expressed in liver, kidney and skeletal muscle. Also expressed in islet and beta-cell insulinoma cell line.

It localises to the endoplasmic reticulum membrane. It is found in the cytoplasmic vesicle. Its subcellular location is the secretory vesicle. Functionally, participates in the regulation of cellular Ca(2+) homeostasis, at least partly, by modulating the filling state of the endoplasmic reticulum Ca(2+) store. Negatively regulates the ER stress response and positively regulates the stability of V-ATPase subunits ATP6V1A and ATP1B1 by preventing their degradation through an unknown proteasome-independent mechanism. In Homo sapiens (Human), this protein is Wolframin (WFS1).